We begin with the raw amino-acid sequence, 145 residues long: D-aminoacyl-tRNA deacylase (145 aa).

The Gly-cisPro motif, important for rejection of L-amino acids signature appears at 137–138; the sequence is GP.

This sequence belongs to the DTD family. Homodimer.

It is found in the cytoplasm. It catalyses the reaction glycyl-tRNA(Ala) + H2O = tRNA(Ala) + glycine + H(+). The catalysed reaction is a D-aminoacyl-tRNA + H2O = a tRNA + a D-alpha-amino acid + H(+). In terms of biological role, an aminoacyl-tRNA editing enzyme that deacylates mischarged D-aminoacyl-tRNAs. Also deacylates mischarged glycyl-tRNA(Ala), protecting cells against glycine mischarging by AlaRS. Acts via tRNA-based rather than protein-based catalysis; rejects L-amino acids rather than detecting D-amino acids in the active site. By recycling D-aminoacyl-tRNA to D-amino acids and free tRNA molecules, this enzyme counteracts the toxicity associated with the formation of D-aminoacyl-tRNA entities in vivo and helps enforce protein L-homochirality. This is D-aminoacyl-tRNA deacylase from Colwellia psychrerythraea (strain 34H / ATCC BAA-681) (Vibrio psychroerythus).